We begin with the raw amino-acid sequence, 284 residues long: Bifunctional protein FolD (284 aa).

Residues 163–165, Ser-188, and Ile-229 contribute to the NADP(+) site; that span reads GRS.

This sequence belongs to the tetrahydrofolate dehydrogenase/cyclohydrolase family. Homodimer.

The catalysed reaction is (6R)-5,10-methylene-5,6,7,8-tetrahydrofolate + NADP(+) = (6R)-5,10-methenyltetrahydrofolate + NADPH. The enzyme catalyses (6R)-5,10-methenyltetrahydrofolate + H2O = (6R)-10-formyltetrahydrofolate + H(+). It participates in one-carbon metabolism; tetrahydrofolate interconversion. In terms of biological role, catalyzes the oxidation of 5,10-methylenetetrahydrofolate to 5,10-methenyltetrahydrofolate and then the hydrolysis of 5,10-methenyltetrahydrofolate to 10-formyltetrahydrofolate. The sequence is that of Bifunctional protein FolD from Campylobacter hominis (strain ATCC BAA-381 / DSM 21671 / CCUG 45161 / LMG 19568 / NCTC 13146 / CH001A).